A 500-amino-acid polypeptide reads, in one-letter code: Glycerol kinase (500 aa).

Residue threonine 11 participates in ADP binding. ATP-binding residues include threonine 11, threonine 12, and serine 13. Position 11 (threonine 11) interacts with sn-glycerol 3-phosphate. Arginine 15 lines the ADP pocket. Positions 81, 82, 133, and 242 each coordinate sn-glycerol 3-phosphate. Glycerol contacts are provided by arginine 81, glutamate 82, tyrosine 133, aspartate 242, and glutamine 243. ADP is bound by residues threonine 264 and glycine 307. ATP-binding residues include threonine 264, glycine 307, glutamine 311, and glycine 411. Glycine 411 provides a ligand contact to ADP.

Belongs to the FGGY kinase family.

It catalyses the reaction glycerol + ATP = sn-glycerol 3-phosphate + ADP + H(+). The protein operates within polyol metabolism; glycerol degradation via glycerol kinase pathway; sn-glycerol 3-phosphate from glycerol: step 1/1. With respect to regulation, inhibited by fructose 1,6-bisphosphate (FBP). In terms of biological role, key enzyme in the regulation of glycerol uptake and metabolism. Catalyzes the phosphorylation of glycerol to yield sn-glycerol 3-phosphate. This Bradyrhizobium sp. (strain BTAi1 / ATCC BAA-1182) protein is Glycerol kinase.